The primary structure comprises 322 residues: UDP-N-acetylenolpyruvoylglucosamine reductase (322 aa).

Residues 36-202 (RAGGPAQVLF…TSVLFEGVPG (167 aa)) form the FAD-binding PCMH-type domain. Arg182 is an active-site residue. Ser231 functions as the Proton donor in the catalytic mechanism. Glu301 is an active-site residue.

The protein belongs to the MurB family. It depends on FAD as a cofactor.

It is found in the cytoplasm. It catalyses the reaction UDP-N-acetyl-alpha-D-muramate + NADP(+) = UDP-N-acetyl-3-O-(1-carboxyvinyl)-alpha-D-glucosamine + NADPH + H(+). Its pathway is cell wall biogenesis; peptidoglycan biosynthesis. Cell wall formation. This chain is UDP-N-acetylenolpyruvoylglucosamine reductase, found in Brucella abortus (strain S19).